A 188-amino-acid chain; its full sequence is Elongation factor P-like protein (188 aa).

Belongs to the elongation factor P family.

In Xanthomonas euvesicatoria pv. vesicatoria (strain 85-10) (Xanthomonas campestris pv. vesicatoria), this protein is Elongation factor P-like protein.